The sequence spans 373 residues: Queuine tRNA-ribosyltransferase (373 aa).

The active-site Proton acceptor is Asp-94. Residues 94-98 (DSGGF), Asp-148, Gln-191, and Gly-218 each bind substrate. Positions 249 to 255 (GVGTPDY) are RNA binding. Residue Asp-268 is the Nucleophile of the active site. Residues 273–277 (TRIGR) form an RNA binding; important for wobble base 34 recognition region. Cys-306, Cys-308, Cys-311, and His-337 together coordinate Zn(2+).

It belongs to the queuine tRNA-ribosyltransferase family. Homodimer. Within each dimer, one monomer is responsible for RNA recognition and catalysis, while the other monomer binds to the replacement base PreQ1. The cofactor is Zn(2+).

It carries out the reaction 7-aminomethyl-7-carbaguanine + guanosine(34) in tRNA = 7-aminomethyl-7-carbaguanosine(34) in tRNA + guanine. It participates in tRNA modification; tRNA-queuosine biosynthesis. In terms of biological role, catalyzes the base-exchange of a guanine (G) residue with the queuine precursor 7-aminomethyl-7-deazaguanine (PreQ1) at position 34 (anticodon wobble position) in tRNAs with GU(N) anticodons (tRNA-Asp, -Asn, -His and -Tyr). Catalysis occurs through a double-displacement mechanism. The nucleophile active site attacks the C1' of nucleotide 34 to detach the guanine base from the RNA, forming a covalent enzyme-RNA intermediate. The proton acceptor active site deprotonates the incoming PreQ1, allowing a nucleophilic attack on the C1' of the ribose to form the product. After dissociation, two additional enzymatic reactions on the tRNA convert PreQ1 to queuine (Q), resulting in the hypermodified nucleoside queuosine (7-(((4,5-cis-dihydroxy-2-cyclopenten-1-yl)amino)methyl)-7-deazaguanosine). In Ruminiclostridium cellulolyticum (strain ATCC 35319 / DSM 5812 / JCM 6584 / H10) (Clostridium cellulolyticum), this protein is Queuine tRNA-ribosyltransferase.